Reading from the N-terminus, the 44-residue chain is Alpha-amylase inhibitor magnificamide (44 aa).

3 disulfide bridges follow: Cys-6/Cys-38, Cys-16/Cys-33, and Cys-20/Cys-39. Residues 7–10 (YIYH) are inhibitory motif.

Belongs to the sea anemone alpha-amylase inhibitor family.

The protein localises to the secreted. Its function is as follows. Mammalian alpha-amylase (AMY2A) inhibitor. The recombinant peptide inhibits porcine pancreatic (Ki=0.17 nM) and human saliva alpha-amylases (Ki=7.7 nM). It does not show antimicrobial (tested on fungi and bacteria) or channel modulating activities (tested on 18 voltage-gated sodium and potassium channles). The sequence is that of Alpha-amylase inhibitor magnificamide from Heteractis magnifica (Magnificent sea anemone).